The chain runs to 235 residues: dITP/XTP pyrophosphatase (235 aa).

7–12 (STNPGK) contacts substrate. Catalysis depends on aspartate 70, which acts as the Proton acceptor. Position 70 (aspartate 70) interacts with Mg(2+). Substrate-binding positions include serine 71, 180 to 183 (FGYD), lysine 211, and 216 to 217 (HR).

The protein belongs to the HAM1 NTPase family. In terms of assembly, homodimer. Mg(2+) is required as a cofactor.

The catalysed reaction is XTP + H2O = XMP + diphosphate + H(+). The enzyme catalyses dITP + H2O = dIMP + diphosphate + H(+). It catalyses the reaction ITP + H2O = IMP + diphosphate + H(+). Pyrophosphatase that catalyzes the hydrolysis of nucleoside triphosphates to their monophosphate derivatives, with a high preference for the non-canonical purine nucleotides XTP (xanthosine triphosphate), dITP (deoxyinosine triphosphate) and ITP. Seems to function as a house-cleaning enzyme that removes non-canonical purine nucleotides from the nucleotide pool, thus preventing their incorporation into DNA/RNA and avoiding chromosomal lesions. The chain is dITP/XTP pyrophosphatase from Anaeromyxobacter dehalogenans (strain 2CP-C).